The chain runs to 56 residues: Large ribosomal subunit protein bL33 (56 aa).

This sequence belongs to the bacterial ribosomal protein bL33 family.

The sequence is that of Large ribosomal subunit protein bL33 from Dichelobacter nodosus (strain VCS1703A).